The primary structure comprises 464 residues: Formin-like protein 19 (464 aa).

Residues 1–74 (MSLVDISGAY…PRPCSRPPKT (74 aa)) form a disordered region. Residues 14-70 (PLPPPPPPLMRRRAPLPPPPPPPLMRRRAPPPPPPPLMRRRAPPPPPPPPLPRPCSR) are compositionally biased toward pro residues. Residues 68-462 (CSRPPKTKCS…KAAKEAEMEK (395 aa)) form the FH2 domain.

Belongs to the formin-like family. Class-II subfamily.

The chain is Formin-like protein 19 (FH19) from Arabidopsis thaliana (Mouse-ear cress).